Reading from the N-terminus, the 128-residue chain is Ribosome-binding factor A (128 aa).

This sequence belongs to the RbfA family. Monomer. Binds 30S ribosomal subunits, but not 50S ribosomal subunits or 70S ribosomes.

The protein localises to the cytoplasm. Its function is as follows. One of several proteins that assist in the late maturation steps of the functional core of the 30S ribosomal subunit. Associates with free 30S ribosomal subunits (but not with 30S subunits that are part of 70S ribosomes or polysomes). Required for efficient processing of 16S rRNA. May interact with the 5'-terminal helix region of 16S rRNA. This is Ribosome-binding factor A from Acidithiobacillus ferrooxidans (strain ATCC 23270 / DSM 14882 / CIP 104768 / NCIMB 8455) (Ferrobacillus ferrooxidans (strain ATCC 23270)).